The chain runs to 213 residues: Probable RNA 2'-phosphotransferase (213 aa).

Belongs to the KptA/TPT1 family.

Removes the 2'-phosphate from RNA via an intermediate in which the phosphate is ADP-ribosylated by NAD followed by a presumed transesterification to release the RNA and generate ADP-ribose 1''-2''-cyclic phosphate (APPR&gt;P). May function as an ADP-ribosylase. In Pyrobaculum aerophilum (strain ATCC 51768 / DSM 7523 / JCM 9630 / CIP 104966 / NBRC 100827 / IM2), this protein is Probable RNA 2'-phosphotransferase.